The primary structure comprises 394 residues: 1-deoxy-D-xylulose 5-phosphate reductoisomerase (394 aa).

Residues Thr-6, Gly-7, Ser-8, Ile-9, Ala-32, and Asn-124 each coordinate NADPH. Residue Lys-125 participates in 1-deoxy-D-xylulose 5-phosphate binding. Glu-126 is an NADPH binding site. A Mn(2+)-binding site is contributed by Asp-148. Ser-149, Glu-150, Ser-174, and His-197 together coordinate 1-deoxy-D-xylulose 5-phosphate. Glu-150 is a Mn(2+) binding site. Residue Gly-203 participates in NADPH binding. 1-deoxy-D-xylulose 5-phosphate contacts are provided by Ser-210, Asn-215, Lys-216, and Glu-219. Glu-219 is a Mn(2+) binding site.

Belongs to the DXR family. Requires Mg(2+) as cofactor. Mn(2+) serves as cofactor.

The enzyme catalyses 2-C-methyl-D-erythritol 4-phosphate + NADP(+) = 1-deoxy-D-xylulose 5-phosphate + NADPH + H(+). It participates in isoprenoid biosynthesis; isopentenyl diphosphate biosynthesis via DXP pathway; isopentenyl diphosphate from 1-deoxy-D-xylulose 5-phosphate: step 1/6. In terms of biological role, catalyzes the NADPH-dependent rearrangement and reduction of 1-deoxy-D-xylulose-5-phosphate (DXP) to 2-C-methyl-D-erythritol 4-phosphate (MEP). The chain is 1-deoxy-D-xylulose 5-phosphate reductoisomerase from Streptomyces avermitilis (strain ATCC 31267 / DSM 46492 / JCM 5070 / NBRC 14893 / NCIMB 12804 / NRRL 8165 / MA-4680).